The primary structure comprises 189 residues: Large ribosomal subunit protein bL9 (189 aa).

The protein belongs to the bacterial ribosomal protein bL9 family.

Its function is as follows. Binds to the 23S rRNA. In Methylobacterium nodulans (strain LMG 21967 / CNCM I-2342 / ORS 2060), this protein is Large ribosomal subunit protein bL9.